Reading from the N-terminus, the 217-residue chain is Ribosome maturation factor RimP (217 aa).

This sequence belongs to the RimP family.

It localises to the cytoplasm. In terms of biological role, required for maturation of 30S ribosomal subunits. This Nocardia farcinica (strain IFM 10152) protein is Ribosome maturation factor RimP.